The chain runs to 401 residues: Exodeoxyribonuclease 7 large subunit (401 aa).

The protein belongs to the XseA family. In terms of assembly, heterooligomer composed of large and small subunits.

It localises to the cytoplasm. The catalysed reaction is Exonucleolytic cleavage in either 5'- to 3'- or 3'- to 5'-direction to yield nucleoside 5'-phosphates.. Its function is as follows. Bidirectionally degrades single-stranded DNA into large acid-insoluble oligonucleotides, which are then degraded further into small acid-soluble oligonucleotides. This is Exodeoxyribonuclease 7 large subunit from Thermoanaerobacter sp. (strain X514).